A 941-amino-acid chain; its full sequence is MSDYKHTLNLPQTDFPMRGNLPQREPDMLKRWGDIELYEKIREEFKGREKFILHDGPPYANGNIHLGHAVNKILKDIIVKSKTVAGYDAPYVPGWDCHGLPIEHKVETMIGRAGDKVGYKEFRRKCREYALEQVAKQREDFIRLGVFGDWFKPYLTLDFKTEADIIRALGKIATSGHLQKGYKPVYWSVVGGSALAEAEVEYKDKTSNSIDVSYPAENEQDLLSAFADASGEGAVSIVIWTTTPWTLPASLAVSLGAEIDYALTQCSVDGRPQRWIVAEKMLESVMARCGVEDYQVVGRCTGQDLEGKTFLHPFYKRSIPALLGDHVTLDAGTGVVHTAPDHGMEDFAVCNKYGIETINPLDDRGVYRDNVELFAGEHVYKVDDHVIEVLKERGRLLSHGKITHSYAHCWRTKTPLIYRATPQWFISMDKQGLRDQALAEIKLVRWVPSWGQNRIEAMIEQSPDWCISRQRTWGVPIAFFVHKETQELHPDTARLVEEVAKQVEKTGIDAWWDINAEDLLGADAQNYEKVTDTLDVWFDSGVTHSAVLEQREELGQFPADLYLEGSDQHRGWFQSSLKTAVAIKGKAPYRQVLTHGFTVDEKGHKMSKSLGNGIEPQEVMNKLGADILRLWVAATDYSAEMVLSKNILERTADSYRRIRNTSRFLLANINDFDPVKDMVAMDDLLALDRWIVDRAWLLQEELKKAYEQYNFVQVYQKVHNFCSVELGSFYLDVIKDRQYTMKLDSLGCRSAQTAQYHVIEALVRWIAPILSFTAEEIWSYIPGQRAESIFLETFYEGLQPLAEGSEMGRDYWSRLLRVRTSVNKALEEARNAGKVKGSLTTEVSLFATPEMQHDLNALGEELRFVFITSGASVFGVEDASESNSVATETEGLRVGIRSSEHKKCGRCWHHREDVGAHGSHEDLCGRCIENIDGSGEERKYA.

The short motif at 58-68 (PYANGNIHLGH) is the 'HIGH' region element. Position 564 (Glu564) interacts with L-isoleucyl-5'-AMP. A 'KMSKS' region motif is present at residues 605 to 609 (KMSKS). An ATP-binding site is contributed by Lys608. 4 residues coordinate Zn(2+): Cys904, Cys907, Cys924, and Cys927.

This sequence belongs to the class-I aminoacyl-tRNA synthetase family. IleS type 1 subfamily. As to quaternary structure, monomer. The cofactor is Zn(2+).

It is found in the cytoplasm. The enzyme catalyses tRNA(Ile) + L-isoleucine + ATP = L-isoleucyl-tRNA(Ile) + AMP + diphosphate. Its function is as follows. Catalyzes the attachment of isoleucine to tRNA(Ile). As IleRS can inadvertently accommodate and process structurally similar amino acids such as valine, to avoid such errors it has two additional distinct tRNA(Ile)-dependent editing activities. One activity is designated as 'pretransfer' editing and involves the hydrolysis of activated Val-AMP. The other activity is designated 'posttransfer' editing and involves deacylation of mischarged Val-tRNA(Ile). This chain is Isoleucine--tRNA ligase, found in Hahella chejuensis (strain KCTC 2396).